Consider the following 179-residue polypeptide: Large ribosomal subunit protein uL10 (179 aa).

Belongs to the universal ribosomal protein uL10 family. Part of the ribosomal stalk of the 50S ribosomal subunit. The N-terminus interacts with L11 and the large rRNA to form the base of the stalk. The C-terminus forms an elongated spine to which L12 dimers bind in a sequential fashion forming a multimeric L10(L12)X complex.

In terms of biological role, forms part of the ribosomal stalk, playing a central role in the interaction of the ribosome with GTP-bound translation factors. The polypeptide is Large ribosomal subunit protein uL10 (Symbiobacterium thermophilum (strain DSM 24528 / JCM 14929 / IAM 14863 / T)).